Consider the following 338-residue polypeptide: RNA 3'-terminal phosphate cyclase (338 aa).

ATP is bound by residues Gln103 and Tyr283–Gln287. Residue His308 is the Tele-AMP-histidine intermediate of the active site.

This sequence belongs to the RNA 3'-terminal cyclase family. Type 1 subfamily.

The protein resides in the cytoplasm. The catalysed reaction is a 3'-end 3'-phospho-ribonucleotide-RNA + ATP = a 3'-end 2',3'-cyclophospho-ribonucleotide-RNA + AMP + diphosphate. Catalyzes the conversion of 3'-phosphate to a 2',3'-cyclic phosphodiester at the end of RNA. The mechanism of action of the enzyme occurs in 3 steps: (A) adenylation of the enzyme by ATP; (B) transfer of adenylate to an RNA-N3'P to produce RNA-N3'PP5'A; (C) and attack of the adjacent 2'-hydroxyl on the 3'-phosphorus in the diester linkage to produce the cyclic end product. The biological role of this enzyme is unknown but it is likely to function in some aspects of cellular RNA processing. This Shigella boydii serotype 18 (strain CDC 3083-94 / BS512) protein is RNA 3'-terminal phosphate cyclase.